Consider the following 578-residue polypeptide: Asparagine synthetase [glutamine-hydrolyzing] 2 (578 aa).

Residue Cys2 is the For GATase activity of the active site. A Glutamine amidotransferase type-2 domain is found at Cys2–Gly185. Residues Arg50–Ile54, Asn75–Glu77, and Asp98 contribute to the L-glutamine site. The region spanning Leu210–Lys450 is the Asparagine synthetase domain. ATP is bound by residues Leu231, Ile267, and Ser341–Gly342.

As to expression, expressed in the vascular region adjacent to leaf mesophyll cells in the companion cell-sieve tube element complex.

It catalyses the reaction L-aspartate + L-glutamine + ATP + H2O = L-asparagine + L-glutamate + AMP + diphosphate + H(+). It functions in the pathway amino-acid biosynthesis; L-asparagine biosynthesis. Essential for nitrogen assimilation, distribution and remobilization within the plant via the phloem. The protein is Asparagine synthetase [glutamine-hydrolyzing] 2 (ASN2) of Arabidopsis thaliana (Mouse-ear cress).